The following is a 589-amino-acid chain: NADP-dependent malic enzyme (589 aa).

The active-site Proton donor is Tyr-137. Arg-190 provides a ligand contact to NAD(+). The active-site Proton acceptor is the Lys-208. A divalent metal cation contacts are provided by Glu-280, Asp-281, and Asp-304. Asp-304 contributes to the NAD(+) binding site. NADP(+) is bound at residue Leu-333–Ala-349. Asn-445 is a binding site for NAD(+).

This sequence belongs to the malic enzymes family. Homotetramer. Mg(2+) serves as cofactor. Mn(2+) is required as a cofactor.

It is found in the cytoplasm. It catalyses the reaction (S)-malate + NADP(+) = pyruvate + CO2 + NADPH. It carries out the reaction oxaloacetate + H(+) = pyruvate + CO2. The protein is NADP-dependent malic enzyme (ME1) of Phaseolus vulgaris (Kidney bean).